A 363-amino-acid polypeptide reads, in one-letter code: 3-isopropylmalate dehydrogenase (363 aa).

NAD(+) is bound at residue 78-91; that stretch reads GPKWEHLPPDQQPE. The substrate site is built by Arg-99, Arg-109, Arg-138, and Asp-227. Mg(2+)-binding residues include Asp-227, Asp-251, and Asp-255. 285 to 297 contacts NAD(+); sequence GSAPDIAGKNIAN.

The protein belongs to the isocitrate and isopropylmalate dehydrogenases family. LeuB type 1 subfamily. In terms of assembly, homodimer. It depends on Mg(2+) as a cofactor. Mn(2+) is required as a cofactor.

The protein localises to the cytoplasm. It catalyses the reaction (2R,3S)-3-isopropylmalate + NAD(+) = 4-methyl-2-oxopentanoate + CO2 + NADH. The protein operates within amino-acid biosynthesis; L-leucine biosynthesis; L-leucine from 3-methyl-2-oxobutanoate: step 3/4. In terms of biological role, catalyzes the oxidation of 3-carboxy-2-hydroxy-4-methylpentanoate (3-isopropylmalate) to 3-carboxy-4-methyl-2-oxopentanoate. The product decarboxylates to 4-methyl-2 oxopentanoate. In Escherichia coli O157:H7, this protein is 3-isopropylmalate dehydrogenase.